We begin with the raw amino-acid sequence, 295 residues long: MPSGSVLMAADDGFHGPTPDVFKPKSWFEFDLGPIDFYFNKWSALTLFVALFVGGFLWLGFRKATLVPRGLQNFCESIYDFVDLQIAQNVIGERGRTFSPYLTILFCFILVSNVMAVIPVAQFPTTSRIALPMILAAVSWFIFNIVGIREHGAGTYFKDMLVPAPTAPLFVKVILAPIEFVSTMIARPATLAIRLFANMFAGHMLLLVFALGADYLLPKPQFVFGLVSGLMAIALTLFELMIDVLQAYIFTVLTAAYIGGAISSHGGGDHAADHSPIHGHETSAPVTAAGAVARA.

The next 7 membrane-spanning stretches (helical) occupy residues 41-61 (KWSA…WLGF), 101-121 (YLTI…IPVA), 129-149 (IALP…VGIR), 161-181 (LVPA…IEFV), 191-211 (LAIR…VFAL), 222-242 (FVFG…ELMI), and 244-264 (VLQA…AISS).

It belongs to the ATPase A chain family. In terms of assembly, F-type ATPases have 2 components, CF(1) - the catalytic core - and CF(0) - the membrane proton channel. CF(1) has five subunits: alpha(3), beta(3), gamma(1), delta(1), epsilon(1). CF(0) has three main subunits: a(1), b(2) and c(9-12). The alpha and beta chains form an alternating ring which encloses part of the gamma chain. CF(1) is attached to CF(0) by a central stalk formed by the gamma and epsilon chains, while a peripheral stalk is formed by the delta and b chains.

The protein localises to the cell membrane. Its function is as follows. Key component of the proton channel; it plays a direct role in the translocation of protons across the membrane. In Parafrankia sp. (strain EAN1pec), this protein is ATP synthase subunit a.